The chain runs to 236 residues: Ubiquinone biosynthesis O-methyltransferase (236 aa).

The S-adenosyl-L-methionine site is built by Arg39, Gly59, Asp80, and Met124.

Belongs to the methyltransferase superfamily. UbiG/COQ3 family.

It carries out the reaction a 3-demethylubiquinol + S-adenosyl-L-methionine = a ubiquinol + S-adenosyl-L-homocysteine + H(+). The enzyme catalyses a 3-(all-trans-polyprenyl)benzene-1,2-diol + S-adenosyl-L-methionine = a 2-methoxy-6-(all-trans-polyprenyl)phenol + S-adenosyl-L-homocysteine + H(+). The protein operates within cofactor biosynthesis; ubiquinone biosynthesis. O-methyltransferase that catalyzes the 2 O-methylation steps in the ubiquinone biosynthetic pathway. The polypeptide is Ubiquinone biosynthesis O-methyltransferase (Shewanella sp. (strain ANA-3)).